The chain runs to 232 residues: 5'-methylthioadenosine/S-adenosylhomocysteine nucleosidase (232 aa).

Residue E12 is the Proton acceptor of the active site. Residues G78, I152, and 173–174 contribute to the substrate site; that span reads ME. The active-site Proton donor is D197.

Belongs to the PNP/UDP phosphorylase family. MtnN subfamily. As to quaternary structure, homodimer.

It carries out the reaction S-adenosyl-L-homocysteine + H2O = S-(5-deoxy-D-ribos-5-yl)-L-homocysteine + adenine. It catalyses the reaction S-methyl-5'-thioadenosine + H2O = 5-(methylsulfanyl)-D-ribose + adenine. The enzyme catalyses 5'-deoxyadenosine + H2O = 5-deoxy-D-ribose + adenine. Its pathway is amino-acid biosynthesis; L-methionine biosynthesis via salvage pathway; S-methyl-5-thio-alpha-D-ribose 1-phosphate from S-methyl-5'-thioadenosine (hydrolase route): step 1/2. Functionally, catalyzes the irreversible cleavage of the glycosidic bond in both 5'-methylthioadenosine (MTA) and S-adenosylhomocysteine (SAH/AdoHcy) to adenine and the corresponding thioribose, 5'-methylthioribose and S-ribosylhomocysteine, respectively. Also cleaves 5'-deoxyadenosine, a toxic by-product of radical S-adenosylmethionine (SAM) enzymes, into 5-deoxyribose and adenine. Thus, is required for in vivo function of the radical SAM enzymes biotin synthase and lipoic acid synthase, that are inhibited by 5'-deoxyadenosine accumulation. In Pectobacterium carotovorum subsp. carotovorum (strain PC1), this protein is 5'-methylthioadenosine/S-adenosylhomocysteine nucleosidase.